Reading from the N-terminus, the 203-residue chain is 5-formyltetrahydrofolate cyclo-ligase (203 aa).

At Ala2 the chain carries N-acetylalanine. ATP contacts are provided by residues 10–14 (KRSLR) and Arg14. Residues Leu56, Glu61, and 148–152 (RGKGY) contribute to the substrate site. ATP is bound at residue 145-153 (RLGRGKGYY). Residues Asp154 and Asp189 each contribute to the Mg(2+) site.

It belongs to the 5-formyltetrahydrofolate cyclo-ligase family. In terms of assembly, monomer. The cofactor is Mg(2+).

The protein resides in the cytoplasm. It catalyses the reaction (6S)-5-formyl-5,6,7,8-tetrahydrofolate + ATP = (6R)-5,10-methenyltetrahydrofolate + ADP + phosphate. Its function is as follows. Contributes to tetrahydrofolate metabolism. Helps regulate carbon flow through the folate-dependent one-carbon metabolic network that supplies carbon for the biosynthesis of purines, thymidine and amino acids. Catalyzes the irreversible conversion of 5-formyltetrahydrofolate (5-FTHF) to yield 5,10-methenyltetrahydrofolate. The polypeptide is 5-formyltetrahydrofolate cyclo-ligase (MTHFS) (Homo sapiens (Human)).